The primary structure comprises 781 residues: Sialidase (781 aa).

The first 24 residues, 1 to 24 (MRFKNVKKTALMLAMFGMATSSNA), serve as a signal peptide directing secretion. Position 224 (Arg224) interacts with substrate. Asp250 serves as the catalytic Proton acceptor. BNR repeat units lie at residues 263–274 (RTSRDGGITWDT) and 585–596 (IYSDDGGSNWQT). The active site involves Glu619. Residue Arg635 coordinates substrate. Residues 653-664 (FLSKDGGITWSL) form a BNR 3 repeat. Arg712 lines the substrate pocket. The BNR 4 repeat unit spans residues 718–729 (WFSFDEGVTWKG). The active-site Nucleophile is the Tyr740.

The protein belongs to the glycosyl hydrolase 33 family. As to quaternary structure, monomer. The cofactor is Ca(2+).

The protein localises to the secreted. The catalysed reaction is Hydrolysis of alpha-(2-&gt;3)-, alpha-(2-&gt;6)-, alpha-(2-&gt;8)- glycosidic linkages of terminal sialic acid residues in oligosaccharides, glycoproteins, glycolipids, colominic acid and synthetic substrates.. Cleaves the terminal sialic acid (N-acetyl neuraminic acid) from carbohydrate chains in glycoproteins providing free sialic acid which can be used as carbon and energy sources. Sialidases have been suggested to be pathogenic factors in microbial infections. Facilitates cholera toxin binding to host intestinal epithelial cells by converting cell surface polysialogangliosides to GM1 monogangliosides. This chain is Sialidase (nanH), found in Vibrio cholerae serotype O1 (strain ATCC 39541 / Classical Ogawa 395 / O395).